Reading from the N-terminus, the 203-residue chain is MSWVQLRGHRFHFIQASFDAESNEAVQVIHITDLVRVWSCTCSRNQIVNQAESERCPIDPFQTFETLVDVLAEVLVNVSSESRIQLRGSNDEGSLKIFCTSKIAKDIFLEWNWTLWLTPPETIAKMVWFPLINHHLFESETDTSPGSLMSIIRDQKSLLNDKTWFKEALNERSSSSNPSTPRKRSAFADIISPKRPRTRYDFV.

It belongs to the XRCC4-XLF family. XLF subfamily.

It localises to the nucleus. Functionally, involved in double-strand break repair via non-homologous end joining (NHEJ); the repair of a double-strand break in DNA in which the two broken ends are rejoined with little or no sequence complementarity. Has a role in meiosis. The protein is Xrcc4-like factor 1 (xlf1) of Schizosaccharomyces pombe (strain 972 / ATCC 24843) (Fission yeast).